A 238-amino-acid chain; its full sequence is Thrombin-like enzyme collinein-1 (238 aa).

Positions 1–229 (VIGGDECNIN…HLDWIQNIIA (229 aa)) constitute a Peptidase S1 domain. Disulfide bonds link Cys-7/Cys-141, Cys-28/Cys-44, Cys-78/Cys-236, Cys-120/Cys-190, Cys-152/Cys-169, and Cys-180/Cys-205. Residues His-43 and Asp-88 each act as charge relay system in the active site. The active-site Charge relay system is Ser-184.

It belongs to the peptidase S1 family. Snake venom subfamily. Monomer. Expressed by the venom gland.

It is found in the secreted. Its activity is regulated as follows. Inhibited by Cu(2+) and, to a lesser extent, by Zn(2+) and Ba(2+). Not inhibited by Ca(2+) and Mg(2+). In terms of biological role, thrombin-like snake venom serine protease. Releases fibrinopeptide A and B in the conversion of fibrinogen to fibrin, with preferential activity on the alpha chain of fibrinogen. Also hydrolyzes N-p-toluensulfonyl arginine ester (TAME) and chromogenic artificial substrates of the blood coagulation cascade: S-2222 for factor Xa, S-2302 for kallikrein and S-2238 for thrombin. When tested in vitro, the recombinant protein does not degrade blood clots, suggesting that this toxin lacks fibrinolytic activity. In addition, it moderately inhibits human Kv10.1/KCNH1/EAG1 currents, with a mechanism independent of its enzymatic activity. It selectively blocks Kv10.1/KCNH1/EAG1 in a time and dose-dependent manner (IC(50)=4.2 uM for native protein and IC(50)=2.5 uM for recombinant protein). It may have a preference in interacting with Kv10.1/KCNH1/EAG1 in its closed state, since the inhibitory effect of the toxin is decreased at more depolarized potentials. Corroboratively, it may have possible antitumor applications, since it reduces the viability of human breast cancer cell line MCF-7, which strongly expresses Kv10.1/KCNH1/EAG1, but does not affect the liver carcinoma and the non-tumorigenic epithelial breast cell lines, which weakly express Kv10.1/KCNH1/EAG1. When tested on peripheral blood mononuclear cells (PBMC), the native protein shows mild cytotoxicity, whereas the recombinant protein does not show any cytotoxicity. Native form is not immununogenic, since it does not induce statistically significant antibody production in mice, whereas recombinant form shows an antibody titer slightly higher than the native form. In vivo, subplantar injection in mice paw induces a discreet paw edema. In addition, intraperitoneal injection of the recombinant protein into mice led to fibrinogen depletion, resulting in the blood incoagulability. This is Thrombin-like enzyme collinein-1 from Crotalus durissus collilineatus (Brazilian rattlesnake).